A 238-amino-acid chain; its full sequence is Ion-translocating oxidoreductase complex subunit E (238 aa).

Helical transmembrane passes span 20-40, 41-61, 72-92, 95-115, 130-150, and 185-205; these read ALVQ…VVNA, LGLG…VSLI, PAFV…MKAF, ELYQ…AVLG, AVDG…VGAV, and NVIF…LIAA.

Belongs to the NqrDE/RnfAE family. As to quaternary structure, the complex is composed of six subunits: RnfA, RnfB, RnfC, RnfD, RnfE and RnfG.

It is found in the cell inner membrane. Part of a membrane-bound complex that couples electron transfer with translocation of ions across the membrane. In Cellvibrio japonicus (strain Ueda107) (Pseudomonas fluorescens subsp. cellulosa), this protein is Ion-translocating oxidoreductase complex subunit E.